We begin with the raw amino-acid sequence, 179 residues long: Pectinesterase inhibitor 5 (179 aa).

The first 25 residues, 1 to 25 (MATMLINHMLFLTSLLIVVFPVANA), serve as a signal peptide directing secretion. 2 disulfide bridges follow: Cys35–Cys44 and Cys101–Cys141.

The protein belongs to the PMEI family. In terms of tissue distribution, expressed in seeds, buds, and mature flowers.

The protein resides in the secreted. The protein localises to the extracellular space. Its subcellular location is the apoplast. Pectin methylesterase (PME) inhibitor that targets PME from seeds and modulates PME activity and pectin methylesterification during seed germination. This chain is Pectinesterase inhibitor 5, found in Arabidopsis thaliana (Mouse-ear cress).